Here is a 386-residue protein sequence, read N- to C-terminus: Succinate--CoA ligase [ADP-forming] subunit beta (386 aa).

The region spanning 9–244 (KDLLTSYAIP…PSQENVRDVL (236 aa)) is the ATP-grasp domain. Residues Lys-46, 53-55 (GRG), Val-102, and Glu-107 contribute to the ATP site. Mg(2+) contacts are provided by Asn-199 and Asp-213. Substrate-binding positions include Asn-264 and 321 to 323 (GIM).

Belongs to the succinate/malate CoA ligase beta subunit family. As to quaternary structure, heterotetramer of two alpha and two beta subunits. It depends on Mg(2+) as a cofactor.

The catalysed reaction is succinate + ATP + CoA = succinyl-CoA + ADP + phosphate. It carries out the reaction GTP + succinate + CoA = succinyl-CoA + GDP + phosphate. The protein operates within carbohydrate metabolism; tricarboxylic acid cycle; succinate from succinyl-CoA (ligase route): step 1/1. Functionally, succinyl-CoA synthetase functions in the citric acid cycle (TCA), coupling the hydrolysis of succinyl-CoA to the synthesis of either ATP or GTP and thus represents the only step of substrate-level phosphorylation in the TCA. The beta subunit provides nucleotide specificity of the enzyme and binds the substrate succinate, while the binding sites for coenzyme A and phosphate are found in the alpha subunit. The chain is Succinate--CoA ligase [ADP-forming] subunit beta from Chlamydia abortus (strain DSM 27085 / S26/3) (Chlamydophila abortus).